A 158-amino-acid chain; its full sequence is 2-C-methyl-D-erythritol 2,4-cyclodiphosphate synthase (158 aa).

Positions 8 and 10 each coordinate a divalent metal cation. Residues 8 to 10 (DVH) and 34 to 35 (HS) each bind 4-CDP-2-C-methyl-D-erythritol 2-phosphate. His-42 serves as a coordination point for a divalent metal cation. Residues 56 to 58 (DIG), 61 to 65 (FPDTD), 100 to 106 (AQAPKMA), 132 to 135 (TTSE), Phe-139, and Arg-142 each bind 4-CDP-2-C-methyl-D-erythritol 2-phosphate.

The protein belongs to the IspF family. As to quaternary structure, homotrimer. The cofactor is a divalent metal cation.

It carries out the reaction 4-CDP-2-C-methyl-D-erythritol 2-phosphate = 2-C-methyl-D-erythritol 2,4-cyclic diphosphate + CMP. It functions in the pathway isoprenoid biosynthesis; isopentenyl diphosphate biosynthesis via DXP pathway; isopentenyl diphosphate from 1-deoxy-D-xylulose 5-phosphate: step 4/6. Its function is as follows. Involved in the biosynthesis of isopentenyl diphosphate (IPP) and dimethylallyl diphosphate (DMAPP), two major building blocks of isoprenoid compounds. Catalyzes the conversion of 4-diphosphocytidyl-2-C-methyl-D-erythritol 2-phosphate (CDP-ME2P) to 2-C-methyl-D-erythritol 2,4-cyclodiphosphate (ME-CPP) with a corresponding release of cytidine 5-monophosphate (CMP). In Aliivibrio fischeri (strain ATCC 700601 / ES114) (Vibrio fischeri), this protein is 2-C-methyl-D-erythritol 2,4-cyclodiphosphate synthase.